Reading from the N-terminus, the 675-residue chain is G-protein coupled receptor moody (675 aa).

The Extracellular segment spans residues 1-44 (MSDETTGSLGDAFSPMDTPTTTIMPPPADVDESGFSHSLLTFAA). A helical membrane pass occupies residues 45–65 (VMTFLIMIVGICGNLLTVVAL). At 66–73 (LKCPKVRN) the chain is on the cytoplasmic side. Residues 74–94 (VAAAFIISLCIADLLFCALVL) traverse the membrane as a helical segment. Topologically, residues 95-115 (PFQGLRFVQGTWRHGEVLCRL) are extracellular. The cysteines at positions 113 and 192 are disulfide-linked. The chain crosses the membrane as a helical span at residues 116–136 (IPFIQYGNIGVSLLCIAMITI). The Cytoplasmic segment spans residues 137-156 (NRYVMITHYSLYNRIYKRHW). Residues 157–177 (IAIMIAACWLFSYGMQLPTLL) traverse the membrane as a helical segment. Residues 178 to 206 (GAWGRFGYDARLQTCSIMSDRHGHSSKTT) lie on the Extracellular side of the membrane. A helical membrane pass occupies residues 207 to 227 (LFITAFVIPCLVIIACYAKIF). The Cytoplasmic portion of the chain corresponds to 228-327 (WVVHKSEQRL…AKRNEWRITK (100 aa)). The interval 258–316 (TSMPSGDGANPSQVPAGCRVSSDSSSNYSTDVPDTTPGGAGGGAGVKQQPSRVKDQREV) is disordered. Residues 278-294 (SSDSSSNYSTDVPDTTP) are compositionally biased toward low complexity. A helical membrane pass occupies residues 328 to 348 (MVLAIFLSFVICYLPITIVKV). Residues 349–359 (ADKDVEHPSLH) lie on the Extracellular side of the membrane. Residues 360-380 (IFSYIMLYLSACINPIIYVIM) traverse the membrane as a helical segment. Residues 381–675 (NKQYRKAYKT…LMDKKKFPKD (295 aa)) are Cytoplasmic-facing. Disordered stretches follow at residues 475–568 (SKSS…GNGS) and 588–675 (LPPT…FPKD). The segment covering 536–551 (SSVISANPSSSPSPSS) has biased composition (low complexity). Over residues 552–565 (SGGGIYRPGIGSMG) the composition is skewed to gly residues. Basic and acidic residues predominate over residues 666–675 (LMDKKKFPKD).

Belongs to the G-protein coupled receptor 1 family.

Its subcellular location is the cell membrane. Functionally, required in glia to regulate the acute sensitivity to cocaine and to continuously maintain the proper blood-brain barrier (BBB) function. A moody-mediated signaling pathway functions in glia to regulate nervous system insulation and drug-related behaviors. In Drosophila pseudoobscura pseudoobscura (Fruit fly), this protein is G-protein coupled receptor moody.